The sequence spans 226 residues: Large ribosomal subunit protein uL1 (226 aa).

The protein belongs to the universal ribosomal protein uL1 family. Part of the 50S ribosomal subunit.

In terms of biological role, binds directly to 23S rRNA. The L1 stalk is quite mobile in the ribosome, and is involved in E site tRNA release. Functionally, protein L1 is also a translational repressor protein, it controls the translation of the L11 operon by binding to its mRNA. This Treponema pallidum (strain Nichols) protein is Large ribosomal subunit protein uL1.